We begin with the raw amino-acid sequence, 280 residues long: MIQHAGLGYRRDLAEDFLSLSENSPICFIEAAPENWLKMGGWARKQFDRVAERLPLALHGLSMSLGGQAPLDTDLIDGIKEMMRRYDCTFFSDHLSYCHDGGHLYDLLPLPFTEEMVHHTARRIREVQDRLGCRIAVENTSYYLHSPLAEMNEVEFLNAVAREADCGIHLDVNNIYVNAVNHGLLSPEAFLKNVDADRVCYIHIAGHDVETPELLIDTHGAAVLPTVWDLLELAYAKLPTIPPTLLERDFNFPPFAELEAEVAKIADYQTRAGKEYRRAA.

The protein belongs to the UPF0276 family.

The protein is UPF0276 protein NMA0228 of Neisseria meningitidis serogroup A / serotype 4A (strain DSM 15465 / Z2491).